Reading from the N-terminus, the 149-residue chain is Transcription antitermination protein NusB (149 aa).

This sequence belongs to the NusB family.

Functionally, involved in transcription antitermination. Required for transcription of ribosomal RNA (rRNA) genes. Binds specifically to the boxA antiterminator sequence of the ribosomal RNA (rrn) operons. This Acinetobacter baumannii (strain SDF) protein is Transcription antitermination protein NusB.